Reading from the N-terminus, the 383-residue chain is MSDIKEFNLIDVRNNSSIVNDLNNVYKLWGYEEISPSFINNLETIKGREVIDGDELIGIVSNSSLCLRPEMTTSIVKLTSTRLLNKKRPIRLFNSGIVFNKKQSYKNTYKFQENLQSGIELISYDTQYPEIEVINILFDAIDNINLIDSCNLTLLVSTTKIMDLILFNYKNNNYEEIKKCMVNLDHESLDKLNIDNNDKAILKELLFTRGEPAIILKKLKNIYGNNNVIEELDCLFNTLSKISKKYNIKIQLDPTYQPHLNLYAGIVFQLICDNKNVKTIIAKGGRYDELVRYFNPNEKIINGIGFTISIDNLRELIVEKSQTKKKVLLLFKNSYLLDKGINEQKALQKKGIITILYLNPCNDNSKANILMKEHNCTEIQWIK.

Belongs to the class-II aminoacyl-tRNA synthetase family. HisZ subfamily. Heteromultimer composed of HisG and HisZ subunits.

The protein resides in the cytoplasm. The protein operates within amino-acid biosynthesis; L-histidine biosynthesis; L-histidine from 5-phospho-alpha-D-ribose 1-diphosphate: step 1/9. In terms of biological role, required for the first step of histidine biosynthesis. May allow the feedback regulation of ATP phosphoribosyltransferase activity by histidine. This chain is ATP phosphoribosyltransferase regulatory subunit (hisZ), found in Prochlorococcus marinus subsp. pastoris (strain CCMP1986 / NIES-2087 / MED4).